Reading from the N-terminus, the 521-residue chain is Cyclic AMP-responsive element-binding protein 3-like protein 2 (521 aa).

The Cytoplasmic portion of the chain corresponds to 1–378 (MEVLESGEQS…CKLAGTQTGT (378 aa)). A compositionally biased stretch (polar residues) spans 83 to 103 (YSLSEEPRTQSPFTHAATSDS). The interval 83 to 106 (YSLSEEPRTQSPFTHAATSDSFND) is disordered. At serine 93 the chain carries Phosphoserine. Residue lysine 178 forms a Glycyl lysine isopeptide (Lys-Gly) (interchain with G-Cter in SUMO2) linkage. Residue serine 191 is modified to Phosphoserine. A disordered region spans residues 196–264 (SVDQLHLPPT…PHKLQGSGPL (69 aa)). Residues 208–220 (SSHSSDSEGSLSP) show a composition bias toward low complexity. The bZIP domain maps to 294 to 357 (ALKKIRRKIK…RTLLQQLQKL (64 aa)). The segment at 296–325 (KKIRRKIKNKISAQESRRKKKEYMDSLEKK) is basic motif. The tract at residues 336-357 (LRKKVEVLENTNRTLLQQLQKL) is leucine-zipper. Residues 379–399 (CLMVVVLCFAVAFGSFFQGYG) form a helical; Signal-anchor for type II membrane protein membrane-spanning segment. The Lumenal segment spans residues 400-521 (PYPSATKMAL…ELERRVNATF (122 aa)). The S1P recognition signature appears at 427 to 430 (RNLL). N-linked (GlcNAc...) asparagine glycosylation is found at asparagine 481, asparagine 505, and asparagine 518.

The protein belongs to the bZIP family. ATF subfamily. As to quaternary structure, binds DNA as a dimer. Upon ER stress, translocated to the Golgi apparatus, where it is processed by regulated intramembrane proteolysis (RIP) to release the cytosol-facing N-terminal transcription factor domain. The cleavage is performed sequentially by site-1 and site-2 proteases (S1P/MBTPS1 and S2P/MBTPS2). Post-translationally, N-glycosylated. In terms of processing, ubiquitinated by HRD1/SYVN1; undergoes 'Lys-48'-linked ubiquitination, followed by rapid proteasomal degradation under normal conditions. Upon ER stress, SYVN1 E3 ubiquitin-protein ligase dissociates from its substrate, ubiquitination does not occur and CREB3L2 is stabilized. In terms of tissue distribution, widely expressed, including in lung, bladder, ovary, testis and spleen. Highly expressed in chondrocytes.

The protein resides in the endoplasmic reticulum membrane. Its subcellular location is the nucleus. In terms of biological role, transcription factor involved in unfolded protein response (UPR). In the absence of endoplasmic reticulum (ER) stress, inserted into ER membranes, with N-terminal DNA-binding and transcription activation domains oriented toward the cytosolic face of the membrane. In response to ER stress, transported to the Golgi, where it is cleaved in a site-specific manner by resident proteases S1P/MBTPS1 and S2P/MBTPS2. The released N-terminal cytosolic domain is translocated to the nucleus to effect transcription of specific target genes. Plays a critical role in chondrogenesis by activating the transcription of SEC23A, which promotes the transport and secretion of cartilage matrix proteins, and possibly that of ER biogenesis-related genes. In a neuroblastoma cell line, protects cells from ER stress-induced death. In vitro activates transcription of target genes via direct binding to the CRE site. The chain is Cyclic AMP-responsive element-binding protein 3-like protein 2 (Creb3l2) from Mus musculus (Mouse).